The sequence spans 656 residues: UvrABC system protein B (656 aa).

Residues 24–409 (QGVRNRTPSQ…QGHIVEQILR (386 aa)) enclose the Helicase ATP-binding domain. Residue 37 to 44 (GTTGSGKT) participates in ATP binding. Positions 90–113 (YYDYYQPEAYIARNDTYIEKSLLI) match the Beta-hairpin motif. The Helicase C-terminal domain maps to 426 to 589 (QVDDLLEEIR…ITPKPIIKAI (164 aa)). The UVR domain occupies 616-651 (EKLIKKYENLMLQAANAFRFDEAAQYRDKMKAAKEQ).

The protein belongs to the UvrB family. In terms of assembly, forms a heterotetramer with UvrA during the search for lesions. Interacts with UvrC in an incision complex.

The protein resides in the cytoplasm. Functionally, the UvrABC repair system catalyzes the recognition and processing of DNA lesions. A damage recognition complex composed of 2 UvrA and 2 UvrB subunits scans DNA for abnormalities. Upon binding of the UvrA(2)B(2) complex to a putative damaged site, the DNA wraps around one UvrB monomer. DNA wrap is dependent on ATP binding by UvrB and probably causes local melting of the DNA helix, facilitating insertion of UvrB beta-hairpin between the DNA strands. Then UvrB probes one DNA strand for the presence of a lesion. If a lesion is found the UvrA subunits dissociate and the UvrB-DNA preincision complex is formed. This complex is subsequently bound by UvrC and the second UvrB is released. If no lesion is found, the DNA wraps around the other UvrB subunit that will check the other stand for damage. The sequence is that of UvrABC system protein B from Chlamydia abortus (strain DSM 27085 / S26/3) (Chlamydophila abortus).